We begin with the raw amino-acid sequence, 461 residues long: Fumarate hydratase class II (461 aa).

Substrate-binding positions include 97–99 (SGT), 127–130 (HPND), 137–139 (SSN), and threonine 185. The active-site Proton donor/acceptor is the histidine 186. The active site involves serine 316. Substrate-binding positions include serine 317 and 322–324 (KVN).

Belongs to the class-II fumarase/aspartase family. Fumarase subfamily. As to quaternary structure, homotetramer.

The protein localises to the cytoplasm. It carries out the reaction (S)-malate = fumarate + H2O. It functions in the pathway carbohydrate metabolism; tricarboxylic acid cycle; (S)-malate from fumarate: step 1/1. Its function is as follows. Involved in the TCA cycle. Catalyzes the stereospecific interconversion of fumarate to L-malate. This chain is Fumarate hydratase class II, found in Staphylococcus epidermidis (strain ATCC 35984 / DSM 28319 / BCRC 17069 / CCUG 31568 / BM 3577 / RP62A).